Reading from the N-terminus, the 310-residue chain is Porphobilinogen deaminase (310 aa).

C242 is subject to S-(dipyrrolylmethanemethyl)cysteine.

Belongs to the HMBS family. As to quaternary structure, monomer. Dipyrromethane serves as cofactor.

The enzyme catalyses 4 porphobilinogen + H2O = hydroxymethylbilane + 4 NH4(+). The protein operates within porphyrin-containing compound metabolism; protoporphyrin-IX biosynthesis; coproporphyrinogen-III from 5-aminolevulinate: step 2/4. In terms of biological role, tetrapolymerization of the monopyrrole PBG into the hydroxymethylbilane pre-uroporphyrinogen in several discrete steps. This Shewanella oneidensis (strain ATCC 700550 / JCM 31522 / CIP 106686 / LMG 19005 / NCIMB 14063 / MR-1) protein is Porphobilinogen deaminase.